A 403-amino-acid chain; its full sequence is Protein IQ-DOMAIN 23 (403 aa).

The interval 1 to 43 is disordered; it reads MGFFGRLFGSKKKSDKAASSRDKRRWSFTTRSSNSSKRAPAVT. A Nuclear localization signal motif is present at residues 10–17; it reads SKKKSDKA. Polar residues predominate over residues 27–43; it reads SFTTRSSNSSKRAPAVT. A calmodulin-binding region spans residues 115–133; it reads QENIAAMKIQSAFRGYLAR. 2 consecutive IQ domains span residues 116–144 and 145–167; these read ENIA…ALVK and LQAL…RMQT. Disordered regions lie at residues 176–208, 242–301, and 381–403; these read RARA…RSLH, ILEV…PTSR, and GGDS…SFLV. Residues 257-267 are compositionally biased toward basic and acidic residues; sequence LRSERNNESPR.

The protein belongs to the IQD family. As to quaternary structure, binds to multiple calmodulin (CaM) in the presence of Ca(2+) and CaM-like proteins.

The protein localises to the nucleus. The protein resides in the nucleolus. Its subcellular location is the cytoplasm. It localises to the cytoskeleton. It is found in the cell membrane. In terms of biological role, may be involved in cooperative interactions with calmodulins or calmodulin-like proteins. Recruits calmodulin proteins to microtubules, thus being a potential scaffold in cellular signaling and trafficking. May associate with nucleic acids and regulate gene expression at the transcriptional or post-transcriptional level. This chain is Protein IQ-DOMAIN 23, found in Arabidopsis thaliana (Mouse-ear cress).